The chain runs to 687 residues: Acetolactate synthase catalytic subunit, mitochondrial (687 aa).

Residues 1 to 90 constitute a mitochondrion transit peptide; sequence MIRQSTLKNF…AEPDMDTSFV (90 aa). The span at 43–52 shows a compositional bias: low complexity; it reads YYSASPLPAS. Residues 43–68 are disordered; sequence YYSASPLPASKRPEPAPSFNVDPLEQ. Glu139 is a thiamine diphosphate binding site. Residues Arg241, 355–376, and 407–426 contribute to the FAD site; these read HGCA…VGAR and EVSP…VEGD. Residues 499 to 579 are thiamine pyrophosphate binding; the sequence is QHQMWAAQHW…VKILILNNEE (81 aa). Asp550, Asn577, and Glu579 together coordinate Mg(2+).

Belongs to the TPP enzyme family. Homodimer. The acetolactate synthase complex contains the catalytic subunit ILV2 and the regulatory small subunit ILV6. It depends on Mg(2+) as a cofactor. Thiamine diphosphate is required as a cofactor.

The protein resides in the mitochondrion. The enzyme catalyses 2 pyruvate + H(+) = (2S)-2-acetolactate + CO2. It carries out the reaction 2-oxobutanoate + pyruvate + H(+) = (S)-2-ethyl-2-hydroxy-3-oxobutanoate + CO2. The protein operates within amino-acid biosynthesis; L-isoleucine biosynthesis; L-isoleucine from 2-oxobutanoate: step 1/4. It functions in the pathway amino-acid biosynthesis; L-valine biosynthesis; L-valine from pyruvate: step 1/4. The regulatory subunit ILV6 stimulates enzymatic activity seven- to tenfold and confers sensitivity to inhibition by valine and activation by ATP. Functionally, catalytic subunit of mitochondrial acetolactate synthase, which catalyzes the first of a series of common steps in the biosynthesis of the branched-chain amino acids. Catalyzes the irreversible decarboxylation of pyruvate to a bound hydroxyethyl group that then condenses with either a second pyruvate molecule to form 2-acetolactate (AL) or with 2-ketobutyrate to form 2-aceto-2-hydroxybutyrate (AHB). The first product is the precursor for valine and leucine biosynthesis, while the second leads to isoleucine. The protein is Acetolactate synthase catalytic subunit, mitochondrial (ILV2) of Saccharomyces cerevisiae (strain ATCC 204508 / S288c) (Baker's yeast).